Consider the following 167-residue polypeptide: Ribosome maturation factor RimM (167 aa).

Residues 92-166 form the PRC barrel domain; it reads DDEFYHADLI…RIVADPPEEQ (75 aa).

It belongs to the RimM family. As to quaternary structure, binds ribosomal protein uS19.

The protein localises to the cytoplasm. In terms of biological role, an accessory protein needed during the final step in the assembly of 30S ribosomal subunit, possibly for assembly of the head region. Essential for efficient processing of 16S rRNA. May be needed both before and after RbfA during the maturation of 16S rRNA. It has affinity for free ribosomal 30S subunits but not for 70S ribosomes. The polypeptide is Ribosome maturation factor RimM (Paracoccus denitrificans (strain Pd 1222)).